The sequence spans 304 residues: Nod factor export ATP-binding protein I (304 aa).

One can recognise an ABC transporter domain in the interval 6–236 (IDFRNVEKRY…EIGCDVIEIY (231 aa)). 38–45 (GPNGAGKT) contacts ATP.

This sequence belongs to the ABC transporter superfamily. Lipooligosaccharide exporter (TC 3.A.1.102) family. The complex is composed of two ATP-binding proteins (NodI) and two transmembrane proteins (NodJ).

Its subcellular location is the cell inner membrane. Functionally, part of the ABC transporter complex NodIJ involved in the export of the nodulation factors (Nod factors), the bacterial signal molecules that induce symbiosis and subsequent nodulation induction. Nod factors are LCO (lipo-chitin oligosaccharide), a modified beta-1,4-linked N-acetylglucosamine oligosaccharide. This subunit is responsible for energy coupling to the transport system. The chain is Nod factor export ATP-binding protein I from Burkholderia orbicola (strain AU 1054).